Reading from the N-terminus, the 156-residue chain is Probable chemoreceptor glutamine deamidase CheD (156 aa).

It belongs to the CheD family.

The enzyme catalyses L-glutaminyl-[protein] + H2O = L-glutamyl-[protein] + NH4(+). Functionally, probably deamidates glutamine residues to glutamate on methyl-accepting chemotaxis receptors (MCPs), playing an important role in chemotaxis. The sequence is that of Probable chemoreceptor glutamine deamidase CheD from Bdellovibrio bacteriovorus (strain ATCC 15356 / DSM 50701 / NCIMB 9529 / HD100).